The following is a 355-amino-acid chain: MIPRKRYGSKNTDQGVYLGLSKTQVLSPATAGSSSSDIAPLPPPVALVPPPPDTMSCRDRTQEFLSACKSLQSRQNGIQANKPALRAVRQRSEFTLMAKRIGKDLSNTFAKLEKLTILAKRKSLFDDKAVEIEELTYIIKQDINSLNKQIAQLQDFVRAKGSQSGRHLQTHSNTIVVSLQSKLASMSNDFKSVLEVRTENLKQQRSRREQFSRAPVSALPLAPNHLGGGAVVLGAESRASGDVAIDMMDSRTSQQLQLIDEQDSYIQSRADTMQNIESTIVELGSIFQQLAHMVKEQEETIQRIDENVLGAQLDVEAAHSEILKYFQSVTSNRWLMVKIFLILIVFFIIFVVFLA.

Residues 1-333 are Cytoplasmic-facing; it reads MIPRKRYGSK…KYFQSVTSNR (333 aa). Residues 28–37 show a composition bias toward polar residues; it reads PATAGSSSSD. A disordered region spans residues 28 to 47; that stretch reads PATAGSSSSDIAPLPPPVAL. The IxM motif; signal for cargo packaging into COPII-coated vesicles signature appears at 245–247; the sequence is IDM. Positions 263-325 constitute a t-SNARE coiled-coil homology domain; that stretch reads DSYIQSRADT…EAAHSEILKY (63 aa). Residues 287–318 are a coiled coil; the sequence is FQQLAHMVKEQEETIQRIDENVLGAQLDVEAA. A helical; Anchor for type IV membrane protein membrane pass occupies residues 334–354; sequence WLMVKIFLILIVFFIIFVVFL. Position 355 (Ala-355) is a topological domain, vesicular.

This sequence belongs to the syntaxin family. As to quaternary structure, part of a ternary complex containing STX5A, NSFL1C and VCP. Part of a unique SNARE complex composed of the Golgi SNAREs GOSR1, GOSR2 and YKT6. This complex also includes VTI1A. Component of a SNARE complex consisting of STX5, YKT6, GOSR1 and BET1L. Interacts with BET1L. Interacts with BET1. Interacts with COG4. Interacts with GM130/GOLGA2. Interacts (via IxM motif) with SEC24C and SEC24D; mediates STX5 packaging into COPII-coated vesicles. Interacts with VLDLR; this interaction mediates VLDLR translocation from the endoplasmic reticulum to the plasma membrane.

It localises to the endoplasmic reticulum-Golgi intermediate compartment membrane. The protein resides in the golgi apparatus membrane. In terms of biological role, mediates endoplasmic reticulum to Golgi transport. Together with p115/USO1 and GM130/GOLGA2, involved in vesicle tethering and fusion at the cis-Golgi membrane to maintain the stacked and inter-connected structure of the Golgi apparatus. This Bos taurus (Bovine) protein is Syntaxin-5 (STX5).